The chain runs to 257 residues: tRNA-cytidine(32) 2-sulfurtransferase (257 aa).

The PP-loop motif motif lies at 37-42 (SGGKDS). [4Fe-4S] cluster is bound by residues Cys-112, Cys-115, and Cys-202.

Belongs to the TtcA family. Homodimer. It depends on Mg(2+) as a cofactor. Requires [4Fe-4S] cluster as cofactor.

Its subcellular location is the cytoplasm. The catalysed reaction is cytidine(32) in tRNA + S-sulfanyl-L-cysteinyl-[cysteine desulfurase] + AH2 + ATP = 2-thiocytidine(32) in tRNA + L-cysteinyl-[cysteine desulfurase] + A + AMP + diphosphate + H(+). It participates in tRNA modification. Its function is as follows. Catalyzes the ATP-dependent 2-thiolation of cytidine in position 32 of tRNA, to form 2-thiocytidine (s(2)C32). The sulfur atoms are provided by the cysteine/cysteine desulfurase (IscS) system. This is tRNA-cytidine(32) 2-sulfurtransferase from Geobacter metallireducens (strain ATCC 53774 / DSM 7210 / GS-15).